Reading from the N-terminus, the 457-residue chain is Toxin and drug export protein A (457 aa).

The N-terminal stretch at 1–23 is a signal peptide; sequence MFTIKKLTLTIVVATTLTGCANI.

Belongs to the outer membrane factor (OMF) (TC 1.B.17) family. As to quaternary structure, homotrimer. Probably part of a complex composed of LtxB, LtxD and TdeA, which forms a single transport channel across the two membranes.

It localises to the cell outer membrane. Required for secretion of the LtxA leukotoxin and resistance to various antimicrobial compounds. The protein is Toxin and drug export protein A of Aggregatibacter actinomycetemcomitans (Actinobacillus actinomycetemcomitans).